A 52-amino-acid chain; its full sequence is Repressor-like protein SSo7c3 (52 aa).

The region spanning 4–51 is the SpoVT-AbrB domain; the sequence is EEVVKVSRNYQVTIPAKVRQKFPVKEGDLVKVIYDENGGVVKIQILDS.

The protein is Repressor-like protein SSo7c3 of Saccharolobus solfataricus (strain ATCC 35092 / DSM 1617 / JCM 11322 / P2) (Sulfolobus solfataricus).